The following is a 338-amino-acid chain: Anthranilate phosphoribosyltransferase (338 aa).

5-phospho-alpha-D-ribose 1-diphosphate is bound by residues Gly78, 81 to 82 (GD), Thr86, 88 to 91 (NIST), 106 to 114 (KHGNRSVSS), and Ser118. An anthranilate-binding site is contributed by Gly78. Residue Ser90 coordinates Mg(2+). Anthranilate is bound at residue Asn109. Arg164 contributes to the anthranilate binding site. Positions 223 and 224 each coordinate Mg(2+).

It belongs to the anthranilate phosphoribosyltransferase family. Homodimer. Mg(2+) serves as cofactor.

The enzyme catalyses N-(5-phospho-beta-D-ribosyl)anthranilate + diphosphate = 5-phospho-alpha-D-ribose 1-diphosphate + anthranilate. It functions in the pathway amino-acid biosynthesis; L-tryptophan biosynthesis; L-tryptophan from chorismate: step 2/5. Functionally, catalyzes the transfer of the phosphoribosyl group of 5-phosphorylribose-1-pyrophosphate (PRPP) to anthranilate to yield N-(5'-phosphoribosyl)-anthranilate (PRA). The protein is Anthranilate phosphoribosyltransferase of Bacillus velezensis (strain DSM 23117 / BGSC 10A6 / LMG 26770 / FZB42) (Bacillus amyloliquefaciens subsp. plantarum).